Here is a 206-residue protein sequence, read N- to C-terminus: Dual specificity phosphatase 29 (206 aa).

Residues 47–194 (HVNQVWPSVY…LRALDITLQE (148 aa)) form the Tyrosine-protein phosphatase domain. 138 to 145 (HCVMGRSR) serves as a coordination point for substrate. Catalysis depends on Cys139, which acts as the Phosphocysteine intermediate.

This sequence belongs to the protein-tyrosine phosphatase family. Non-receptor class dual specificity subfamily.

It localises to the cytoplasm. The protein localises to the nucleus. The catalysed reaction is O-phospho-L-tyrosyl-[protein] + H2O = L-tyrosyl-[protein] + phosphate. It carries out the reaction O-phospho-L-seryl-[protein] + H2O = L-seryl-[protein] + phosphate. It catalyses the reaction O-phospho-L-threonyl-[protein] + H2O = L-threonyl-[protein] + phosphate. Functionally, dual specificity phosphatase able to dephosphorylate phosphotyrosine, phosphoserine and phosphothreonine residues within the same substrate, with a preference for phosphotyrosine as a substrate. Involved in the modulation of AMPK and MAPK1/2 signaling pathways. The polypeptide is Dual specificity phosphatase 29 (dusp29) (Gasterosteus aculeatus (Three-spined stickleback)).